The primary structure comprises 155 residues: cAMP-dependent protein kinase type II-alpha regulatory subunit (155 aa).

The interval 1–34 is disordered; it reads SGSQDLEPSSGLVTDAIADSESEDDEDLDVPIPS. The interval 1 to 81 is dimerization and phosphorylation; sequence SGSQDLEPSS…LQEACKDILL (81 aa). Over residues 18 to 29 the composition is skewed to acidic residues; it reads ADSESEDDEDLD. Phosphoserine occurs at positions 20 and 22. Position 41 is a phosphoserine; by PKA (S41). Residues 82–155 and E150 contribute to the 3',5'-cyclic AMP site; that span reads FKNL…ALMY.

The protein belongs to the cAMP-dependent kinase regulatory chain family. In terms of assembly, the inactive form of the enzyme is composed of two regulatory chains and two catalytic chains. Activation by cAMP produces two active catalytic monomers and a regulatory dimer that binds four cAMP molecules. Interacts with AKAP4 and CBFA2T3. Interacts with the phosphorylated form of PJA2. Interacts with MYRIP; this interaction may link PKA to components of the exocytosis machinery, thus facilitating exocytosis, including insulin release. Forms a complex composed of PRKAR2A, GSK3B and GSKIP through GSKIP interaction; facilitates PKA-induced phosphorylation and regulates GSK3B activity. Interacts with ADCY8; inhibits adenylate cyclase activity through PKA phosphorylation. Post-translationally, phosphorylated by the activated catalytic chain. Four types of regulatory chains are found: I-alpha, I-beta, II-alpha, and II-beta. Their expression varies among tissues and is in some cases constitutive and in others inducible.

The protein resides in the cytoplasm. The protein localises to the cell membrane. Functionally, regulatory subunit of the cAMP-dependent protein kinases involved in cAMP signaling in cells. Type II regulatory chains mediate membrane association by binding to anchoring proteins, including the MAP2 kinase. This chain is cAMP-dependent protein kinase type II-alpha regulatory subunit (PRKAR2A), found in Sus scrofa (Pig).